Consider the following 218-residue polypeptide: Protein-methionine-sulfoxide reductase heme-binding subunit MsrQ (218 aa).

Transmembrane regions (helical) follow at residues 14-34 (AVHAAVLAPIALLGWQFWQVW), 60-80 (LLLITLAITPLRQLTGQAVLI), 86-106 (LGLYAFFYASVHLTAYLWLDL), 121-141 (PYITVGFTAWLLLVPLAITST), and 155-175 (LHMLIYPIGLLAVLHFWWLVK).

This sequence belongs to the MsrQ family. In terms of assembly, heterodimer of a catalytic subunit (MsrP) and a heme-binding subunit (MsrQ). FMN is required as a cofactor. Heme b serves as cofactor.

Its subcellular location is the cell inner membrane. Functionally, part of the MsrPQ system that repairs oxidized periplasmic proteins containing methionine sulfoxide residues (Met-O), using respiratory chain electrons. Thus protects these proteins from oxidative-stress damage caused by reactive species of oxygen and chlorine generated by the host defense mechanisms. MsrPQ is essential for the maintenance of envelope integrity under bleach stress, rescuing a wide series of structurally unrelated periplasmic proteins from methionine oxidation. MsrQ provides electrons for reduction to the reductase catalytic subunit MsrP, using the quinone pool of the respiratory chain. The protein is Protein-methionine-sulfoxide reductase heme-binding subunit MsrQ of Xanthomonas campestris pv. campestris (strain 8004).